A 297-amino-acid chain; its full sequence is Manganese efflux system protein MneP (297 aa).

Helical transmembrane passes span 12-32 (VALIALIANLILMAGKVFFGL), 43-63 (GIHSAADVVASIAVLAVIGIS), 85-105 (IVGIILVIVSVYILIEAILSF), 111-131 (VPQYSALFAALISYVAKEILY), 155-175 (GDIVASLAAFIGVLLAIIGNS), and 177-197 (GWSYLLYADAIASAIVAYLIF).

It belongs to the cation diffusion facilitator (CDF) transporter (TC 2.A.4) family.

The protein localises to the cell membrane. Primary efflux pump for manganese. May prevent manganese intoxication. The polypeptide is Manganese efflux system protein MneP (Bacillus subtilis (strain 168)).